A 62-amino-acid chain; its full sequence is Large ribosomal subunit protein bL32 (62 aa).

A disordered region spans residues 28 to 62 (SIEPTTGEVHRRHHISPDGFYRGRQVIKAKEQDEE).

It belongs to the bacterial ribosomal protein bL32 family.

This chain is Large ribosomal subunit protein bL32, found in Thioalkalivibrio sulfidiphilus (strain HL-EbGR7).